Here is a 219-residue protein sequence, read N- to C-terminus: Ribosomal RNA small subunit methyltransferase Nep1 (219 aa).

S-adenosyl-L-methionine is bound by residues G178, G183, and 196-201 (LYKAPL).

The protein belongs to the class IV-like SAM-binding methyltransferase superfamily. RNA methyltransferase NEP1 family. In terms of assembly, homodimer.

It catalyses the reaction a pseudouridine in rRNA + S-adenosyl-L-methionine = an N(1)-methylpseudouridine in rRNA + S-adenosyl-L-homocysteine + H(+). In terms of biological role, methyltransferase involved in ribosomal biogenesis. Specifically catalyzes the N1-methylation of the pseudouridine corresponding to position 914 in M.jannaschii 16S rRNA. The chain is Ribosomal RNA small subunit methyltransferase Nep1 from Thermococcus onnurineus (strain NA1).